A 90-amino-acid chain; its full sequence is Protein LURE 1.4 (90 aa).

Residues 1–19 form the signal peptide; sequence MKCPSIFLTLLIFVSSCTS. Asn23 carries N-linked (GlcNAc...) asparagine glycosylation. Disulfide bonds link Cys58–Cys75, Cys61–Cys82, and Cys65–Cys84. Residues 67 to 87 form a PRK6 binding region; sequence RRGKYIRTCSFERKLCRCSIS.

The protein belongs to the DEFL family. In terms of assembly, binds to PRK6 LRRs. In terms of tissue distribution, expressed in the pistil. Detected exclusively in the synergid cells.

The protein localises to the secreted. Its function is as follows. Pollen tube attractants guiding pollen tubes to the ovular micropyle. The chain is Protein LURE 1.4 from Arabidopsis thaliana (Mouse-ear cress).